We begin with the raw amino-acid sequence, 388 residues long: Palmitoyltransferase ZDHHC18 (388 aa).

Residues 1 to 67 (MKDCEYQQIS…GSGSLGRRPR (67 aa)) are disordered. Residues 1-90 (MKDCEYQQIS…CGGRLMLAGH (90 aa)) are Cytoplasmic-facing. The span at 10 to 27 (SPGAAPLPASPGARRPGP) shows a compositional bias: low complexity. Residue S19 is modified to Phosphoserine. Positions 28 to 46 (AASPTPGPGPAPPAAPAPP) are enriched in pro residues. Residues 91–111 (GGVFALTLLLILTTTGLFFVF) form a helical membrane-spanning segment. At 112 to 119 (DCPYLARK) the chain is on the lumenal side. The chain crosses the membrane as a helical span at residues 120-140 (LTLAIPIIAAILFFFVMSCLL). The Cytoplasmic portion of the chain corresponds to 141 to 235 (QTSFTDPGIL…GNCVGRRNYR (95 aa)). Residues 192 to 242 (KYCFTCKMFRPPRTSHCSVCDNCVERFDHHCPWVGNCVGRRNYRFFYAFIL) form the DHHC domain. C222 serves as the catalytic S-palmitoyl cysteine intermediate. Residues 236–256 (FFYAFILSLSFLTAFIFACVV) traverse the membrane as a helical segment. Topologically, residues 257–277 (THLTLRAQGSNFLSTLKETPA) are lumenal. A helical membrane pass occupies residues 278–298 (SVLELVICFFSIWSILGLSGF). Residues 299-388 (HTYLVASNLT…PDASMVGGHP (90 aa)) lie on the Cytoplasmic side of the membrane. The interval 364–388 (LPSPIRSDEPACRAKPDASMVGGHP) is disordered. Over residues 369-379 (RSDEPACRAKP) the composition is skewed to basic and acidic residues.

Belongs to the DHHC palmitoyltransferase family. ERF2/ZDHHC9 subfamily. As to expression, widely expressed.

It is found in the golgi apparatus membrane. It catalyses the reaction L-cysteinyl-[protein] + hexadecanoyl-CoA = S-hexadecanoyl-L-cysteinyl-[protein] + CoA. Functionally, palmitoyltransferase that catalyzes the addition of palmitate onto various protein substrates, such as CGAS, HRAS and LCK. Acts as a negative regulator of the cGAS-STING pathway be mediating palmitoylation and inactivation of CGAS. May also have a palmitoyltransferase activity toward the beta-2 adrenergic receptor/ADRB2 and therefore regulate G protein-coupled receptor signaling. The sequence is that of Palmitoyltransferase ZDHHC18 from Homo sapiens (Human).